The sequence spans 462 residues: Chitinase 1 (462 aa).

An N-terminal signal peptide occupies residues 1–17 (MILNLIILLAISIVASA). The GH18 domain maps to 18-291 (SNIAAYWGQN…NQLYQALSGS (274 aa)). The N-linked (GlcNAc...) asparagine glycan is linked to N57. The active-site Proton donor is the E147.

The protein belongs to the glycosyl hydrolase 18 family. Chitinase class III subfamily.

It is found in the secreted. The enzyme catalyses Random endo-hydrolysis of N-acetyl-beta-D-glucosaminide (1-&gt;4)-beta-linkages in chitin and chitodextrins.. This is Chitinase 1 (CHT1) from Candida albicans (Yeast).